Reading from the N-terminus, the 77-residue chain is Small ribosomal subunit protein bS21 (77 aa).

The span at Lys-38 to Arg-52 shows a compositional bias: basic and acidic residues. The segment at Lys-38 to Arg-77 is disordered. Over residues Arg-53–Ala-62 the composition is skewed to basic residues.

This sequence belongs to the bacterial ribosomal protein bS21 family.

The sequence is that of Small ribosomal subunit protein bS21 from Bartonella bacilliformis (strain ATCC 35685 / KC583 / Herrer 020/F12,63).